Reading from the N-terminus, the 104-residue chain is Large ribosomal subunit protein uL24 (104 aa).

Belongs to the universal ribosomal protein uL24 family. As to quaternary structure, part of the 50S ribosomal subunit.

In terms of biological role, one of two assembly initiator proteins, it binds directly to the 5'-end of the 23S rRNA, where it nucleates assembly of the 50S subunit. One of the proteins that surrounds the polypeptide exit tunnel on the outside of the subunit. The polypeptide is Large ribosomal subunit protein uL24 (Bradyrhizobium sp. (strain BTAi1 / ATCC BAA-1182)).